A 247-amino-acid chain; its full sequence is 14-3-3 protein gamma-A (247 aa).

Belongs to the 14-3-3 family. In terms of assembly, homodimer, and heterodimer with other family members.

It localises to the cytoplasm. Its function is as follows. Adapter protein implicated in the regulation of a large spectrum of both general and specialized signaling pathways. Binds to a large number of partners, usually by recognition of a phosphoserine or phosphothreonine motif. Binding generally results in the modulation of the activity of the binding partner. The sequence is that of 14-3-3 protein gamma-A (ywhag-a) from Xenopus laevis (African clawed frog).